We begin with the raw amino-acid sequence, 130 residues long: Small ribosomal subunit protein uS11 (130 aa).

It belongs to the universal ribosomal protein uS11 family. As to quaternary structure, part of the 30S ribosomal subunit. Interacts with proteins S7 and S18. Binds to IF-3.

Located on the platform of the 30S subunit, it bridges several disparate RNA helices of the 16S rRNA. Forms part of the Shine-Dalgarno cleft in the 70S ribosome. The chain is Small ribosomal subunit protein uS11 from Blochmanniella floridana.